Here is a 443-residue protein sequence, read N- to C-terminus: Inactive polypeptide N-acetylgalactosaminyltransferase-like protein 5 (443 aa).

At 1-4 the chain is on the cytoplasmic side; it reads MRNA. A helical; Signal-anchor for type II membrane protein transmembrane segment spans residues 5 to 27; the sequence is IIRCLFYGSLTFGIWTALLFIYL. At 28–443 the chain is on the lumenal side; that stretch reads HHNHVSNWQK…PELEASVNRS (416 aa). The N-linked (GlcNAc...) asparagine glycan is linked to Asn87. Intrachain disulfides connect Cys124–Cys355 and Cys346–Cys422. The catalytic subdomain A stretch occupies residues 133–243; the sequence is LPTASIVICF…RVWLEPLLHA (111 aa). Residues Asp174 and Arg204 each contribute to the substrate site. Residue Asp227 coordinates Mn(2+). Substrate is bound at residue Ser228. His229 lines the Mn(2+) pocket. The interval 301–363 is catalytic subdomain B; it reads PIRSPAMSGG…PCSRVGHISK (63 aa). Trp332 is a binding site for substrate. His360 serves as a coordination point for Mn(2+).

The protein belongs to the glycosyltransferase 2 family. GalNAc-T subfamily. Mn(2+) serves as cofactor. In terms of tissue distribution, expressed in testis.

Its subcellular location is the late endosome membrane. In terms of biological role, probable inactive glycosyltransferase required during spermatid development. May participate in protein loading into the acrosomes and accumulation of ubiquitin-proteasome systems around the head-tail coupling apparatus region. The protein is Inactive polypeptide N-acetylgalactosaminyltransferase-like protein 5 (GALNTL5) of Macaca fascicularis (Crab-eating macaque).